The primary structure comprises 354 residues: Ferrochelatase (354 aa).

Fe cation-binding residues include His-214 and Glu-295.

This sequence belongs to the ferrochelatase family.

The protein resides in the cytoplasm. It catalyses the reaction heme b + 2 H(+) = protoporphyrin IX + Fe(2+). It functions in the pathway porphyrin-containing compound metabolism; protoheme biosynthesis; protoheme from protoporphyrin-IX: step 1/1. Its function is as follows. Catalyzes the ferrous insertion into protoporphyrin IX. The protein is Ferrochelatase of Burkholderia ambifaria (strain ATCC BAA-244 / DSM 16087 / CCUG 44356 / LMG 19182 / AMMD) (Burkholderia cepacia (strain AMMD)).